The chain runs to 373 residues: MLFLGMLKQVVNGTAQSKASSCRKLVLPLKFLGTSQHRIPADANFHSTSISEAEPPRVLITGGLGQLGVGLANLLRKRFGKDNVILSDIRKPPAHVFHSGPFVYANILDYKSLREIVVNHRISWLFHYSALLSAVGEANVSLARDVNITGLHNVLDVAAEYNVRLFVPSTIGAFGPTSPRNPAPDLCIQRPRTIYGVSKVHTELMGEYYYYRYGLDFRCLRYPGIISADSQPGGGTTDYAVQIFHAAAKNGTFECNLEAGTRLPMMYISDCLRATLEVMEAPAERLSMRTYNISAMSFTPEELAQALRKHAPDFQITYCVDPLRQAIAESWPMILDDSNARKDWGWKHDFDLPELVATMLNFHGVSTRVAQVN.

NAD(+) is bound by residues 62–67, 88–90, 106–107, Tyr-195, Lys-199, and Ile-225; these read GGLGQL, DIR, and NI. Tyr-195 serves as the catalytic Proton donor/acceptor.

It belongs to the NAD(P)-dependent epimerase/dehydratase family. As to quaternary structure, homodimer.

The protein localises to the mitochondrion. It carries out the reaction L-threonine + NAD(+) = (2S)-2-amino-3-oxobutanoate + NADH + H(+). It participates in amino-acid degradation; L-threonine degradation via oxydo-reductase pathway; glycine from L-threonine: step 1/2. Catalyzes the NAD(+)-dependent oxidation of L-threonine to 2-amino-3-ketobutyrate, mediating L-threonine catabolism. This is L-threonine 3-dehydrogenase, mitochondrial from Mus musculus (Mouse).